Here is a 486-residue protein sequence, read N- to C-terminus: Protein ZINC INDUCED FACILITATOR 1 (486 aa).

The next 12 membrane-spanning stretches (helical) occupy residues 41–61, 82–102, 109–129, 131–151, 170–190, 212–232, 288–308, 327–347, 362–384, 391–408, 423–443, and 461–481; these read FVWI…PFLY, FVGC…GIVA, PIIL…GLSS, FWMA…LGTM, AVST…GFLA, ALPC…CCFI, IIVY…FALW, TVLA…YPLA, ALMI…SLSL, ILIN…LILQ, IAMT…GILF, and VFFV…KPFL.

The protein belongs to the major facilitator superfamily. As to expression, strongly expressed in developing leaves, differentiating zones of root tips and sepals of developing flowers. Restricted to vascular tissues in older leaves, mature roots, flowers, anthers and filaments. Not expressed in developing anthers.

It is found in the vacuole membrane. Functionally, major facilitator superfamily (MFS) transporter involved in zinc tolerance by participating in vacuolar sequestration of zinc. This Arabidopsis thaliana (Mouse-ear cress) protein is Protein ZINC INDUCED FACILITATOR 1 (ZIF1).